Consider the following 197-residue polypeptide: 3-isopropylmalate dehydratase small subunit (197 aa).

The protein belongs to the LeuD family. LeuD type 1 subfamily. In terms of assembly, heterodimer of LeuC and LeuD.

The catalysed reaction is (2R,3S)-3-isopropylmalate = (2S)-2-isopropylmalate. Its pathway is amino-acid biosynthesis; L-leucine biosynthesis; L-leucine from 3-methyl-2-oxobutanoate: step 2/4. In terms of biological role, catalyzes the isomerization between 2-isopropylmalate and 3-isopropylmalate, via the formation of 2-isopropylmaleate. In Streptococcus suis (strain 98HAH33), this protein is 3-isopropylmalate dehydratase small subunit.